Here is a 351-residue protein sequence, read N- to C-terminus: Dihydroorotate dehydrogenase (quinone) (351 aa).

FMN contacts are provided by residues alanine 67–lysine 71 and threonine 91. Lysine 71 contacts substrate. Asparagine 116–phenylalanine 120 provides a ligand contact to substrate. Residues asparagine 145 and asparagine 178 each coordinate FMN. Asparagine 178 is a substrate binding site. The Nucleophile role is filled by serine 181. Residue asparagine 183 participates in substrate binding. Positions 214 and 242 each coordinate FMN. Residue asparagine 243–threonine 244 coordinates substrate. FMN contacts are provided by residues glycine 262, glycine 291, and tyrosine 312–threonine 313.

This sequence belongs to the dihydroorotate dehydrogenase family. Type 2 subfamily. As to quaternary structure, monomer. FMN is required as a cofactor.

The protein localises to the cell membrane. It catalyses the reaction (S)-dihydroorotate + a quinone = orotate + a quinol. It participates in pyrimidine metabolism; UMP biosynthesis via de novo pathway; orotate from (S)-dihydroorotate (quinone route): step 1/1. Its function is as follows. Catalyzes the conversion of dihydroorotate to orotate with quinone as electron acceptor. The chain is Dihydroorotate dehydrogenase (quinone) from Nitratiruptor sp. (strain SB155-2).